A 257-amino-acid polypeptide reads, in one-letter code: 3-deoxy-manno-octulosonate cytidylyltransferase (257 aa).

It belongs to the KdsB family.

It is found in the cytoplasm. The enzyme catalyses 3-deoxy-alpha-D-manno-oct-2-ulosonate + CTP = CMP-3-deoxy-beta-D-manno-octulosonate + diphosphate. It functions in the pathway nucleotide-sugar biosynthesis; CMP-3-deoxy-D-manno-octulosonate biosynthesis; CMP-3-deoxy-D-manno-octulosonate from 3-deoxy-D-manno-octulosonate and CTP: step 1/1. Its pathway is bacterial outer membrane biogenesis; lipopolysaccharide biosynthesis. Functionally, activates KDO (a required 8-carbon sugar) for incorporation into bacterial lipopolysaccharide in Gram-negative bacteria. The polypeptide is 3-deoxy-manno-octulosonate cytidylyltransferase (Methylococcus capsulatus (strain ATCC 33009 / NCIMB 11132 / Bath)).